Reading from the N-terminus, the 513-residue chain is Matrix metalloproteinase-27 (513 aa).

Residues 1-17 (MKRLLLLFLFFITFSSA) form the signal peptide. Residues 18-98 (FPLVRMTENE…PRCGVPDVGQ (81 aa)) constitute a propeptide, activation peptide. The N-linked (GlcNAc...) asparagine glycan is linked to Asn55. The short motif at 89–96 (PRCGVPDV) is the Cysteine switch element. Residue Cys91 participates in Zn(2+) binding. Asn110 carries an N-linked (GlcNAc...) asparagine glycan. Ca(2+)-binding residues include Asp121 and Asp155. His165 contacts Zn(2+). Asp173, Gly174, and Val178 together coordinate Ca(2+). His181 is a binding site for Zn(2+). Residues Gly188 and Asp192 each coordinate Ca(2+). His194 serves as a coordination point for Zn(2+). Ca(2+)-binding residues include Asp196 and Glu199. His216 is a binding site for Zn(2+). Glu217 is an active-site residue. Residues His220 and His226 each coordinate Zn(2+). Hemopexin repeat units follow at residues 276 to 325 (PHAC…WPSL), 326 to 371 (PADL…GFPG), 373 to 421 (VKKI…FPGI), and 422 to 465 (SIRV…WFQC). Cys279 and Cys465 form a disulfide bridge. Asp286 contacts Ca(2+). Positions 377 and 426 each coordinate Ca(2+). Asn452 carries an N-linked (GlcNAc...) asparagine glycan. The segment at 466 to 513 (KEPKNSSFGFDINKEKAHSGGIKILYHKSLSLFIFGIVHLLKNTSIYQ) is required for retention in the endoplasmic reticulum.

It belongs to the peptidase M10A family. The cofactor is Ca(2+). It depends on Zn(2+) as a cofactor. Post-translationally, N-glycosylated. In terms of tissue distribution, expressed in B-cells. Expressed in a subset of endometrial macrophages related to menstruation and in ovarian and peritoneal endometriotic lesions (at protein level).

It localises to the endoplasmic reticulum. Its function is as follows. Matrix metalloproteinases degrade protein components of the extracellular matrix such as fibronectin, laminin, gelatins and/or collagens. This Homo sapiens (Human) protein is Matrix metalloproteinase-27 (MMP27).